Consider the following 288-residue polypeptide: Structure-specific endonuclease subunit SLX1 (288 aa).

The GIY-YIG domain occupies 7–90 (PFYGVYLLQS…QHPNMTRLIT (84 aa)).

This sequence belongs to the SLX1 family. Forms a heterodimer with SLX4. A divalent metal cation is required as a cofactor.

It is found in the nucleus. Functionally, catalytic subunit of the SLX1-SLX4 structure-specific endonuclease that resolves DNA secondary structures generated during DNA repair and recombination. Has endonuclease activity towards branched DNA substrates, introducing single-strand cuts in duplex DNA close to junctions with ss-DNA. This chain is Structure-specific endonuclease subunit SLX1, found in Yarrowia lipolytica (strain CLIB 122 / E 150) (Yeast).